Reading from the N-terminus, the 158-residue chain is Protein E6 (158 aa).

Zinc fingers lie at residues 32-68 (CVYCRRQLQRTEVYEFAFGDLNVVYRDGVPLAACQSC) and 105-141 (CMCCLKPLSPAEKLRHLNSKRRFHKIAGNFTGQCRHC). Positions 156-158 (TQV) match the PDZ-binding domain motif.

Belongs to the papillomaviridae E6 protein family. Forms homodimers. Interacts with ubiquitin-protein ligase UBE3A/E6-AP; this interaction stimulates UBE3A ubiquitin activity. Interacts with host BAK1.

The protein resides in the host cytoplasm. The protein localises to the host nucleus. Its function is as follows. Plays a major role in the induction and maintenance of cellular transformation. E6 associates with host UBE3A/E6-AP ubiquitin-protein ligase and modulates its activity. Protects host keratinocytes from apoptosis by mediating the degradation of host BAK1. May also inhibit host immune response. The polypeptide is Protein E6 (Homo sapiens (Human)).